Here is a 1129-residue protein sequence, read N- to C-terminus: Translation initiation factor IF-2 (1129 aa).

Composition is skewed to low complexity over residues alanine 33 to serine 42 and glycine 56 to proline 99. Disordered stretches follow at residues alanine 33–asparagine 462 and serine 485–arginine 515. Residues serine 100–proline 112 show a composition bias toward pro residues. A compositionally biased stretch (low complexity) spans serine 135–serine 147. Positions alanine 148–threonine 161 are enriched in pro residues. Residues alanine 162–proline 175 show a composition bias toward low complexity. 2 stretches are compositionally biased toward pro residues: residues serine 176–alanine 191 and proline 211–lysine 221. Residues glycine 257 to arginine 273 are compositionally biased toward low complexity. Positions glycine 431–arginine 445 are enriched in basic and acidic residues. 2 stretches are compositionally biased toward basic residues: residues serine 490–alanine 499 and isoleucine 506–arginine 515. Residues arginine 621–leucine 793 enclose the tr-type G domain. Residues glycine 630–threonine 637 are G1. Glycine 630–threonine 637 is a GTP binding site. Positions glycine 655–histidine 659 are G2. A G3 region spans residues aspartate 680 to glycine 683. Residues aspartate 680 to histidine 684 and asparagine 734 to aspartate 737 contribute to the GTP site. The interval asparagine 734–aspartate 737 is G4. Residues serine 770–leucine 772 are G5.

It belongs to the TRAFAC class translation factor GTPase superfamily. Classic translation factor GTPase family. IF-2 subfamily.

The protein localises to the cytoplasm. Its function is as follows. One of the essential components for the initiation of protein synthesis. Protects formylmethionyl-tRNA from spontaneous hydrolysis and promotes its binding to the 30S ribosomal subunits. Also involved in the hydrolysis of GTP during the formation of the 70S ribosomal complex. The chain is Translation initiation factor IF-2 from Synechococcus sp. (strain CC9311).